The sequence spans 448 residues: Putative RNA-ligase (448 aa).

It belongs to the asfivirus M448R family.

Its subcellular location is the virion. The sequence is that of Putative RNA-ligase from Ornithodoros (relapsing fever ticks).